A 391-amino-acid polypeptide reads, in one-letter code: GTPase Obg (391 aa).

The Obg domain maps to 1–159 (MKFIDEALIR…RDLQLELMLL (159 aa)). In terms of domain architecture, OBG-type G spans 160–333 (ADVGMLGLPN…LTRDIMDFIE (174 aa)). Residues 166–173 (GLPNAGKS), 191–195 (FTTLV), 213–216 (DIPG), 283–286 (NKID), and 314–316 (SAA) each bind GTP. Serine 173 and threonine 193 together coordinate Mg(2+). The disordered stretch occupies residues 361 to 391 (QNPITEDDWDDLDDDGWTEEDDEGVEFIYKP). The segment covering 365-385 (TEDDWDDLDDDGWTEEDDEGV) has biased composition (acidic residues).

This sequence belongs to the TRAFAC class OBG-HflX-like GTPase superfamily. OBG GTPase family. As to quaternary structure, monomer. Mg(2+) serves as cofactor.

It is found in the cytoplasm. Functionally, an essential GTPase which binds GTP, GDP and possibly (p)ppGpp with moderate affinity, with high nucleotide exchange rates and a fairly low GTP hydrolysis rate. Plays a role in control of the cell cycle, stress response, ribosome biogenesis and in those bacteria that undergo differentiation, in morphogenesis control. The polypeptide is GTPase Obg (Glaesserella parasuis serovar 5 (strain SH0165) (Haemophilus parasuis)).